The sequence spans 330 residues: DNA-directed RNA polymerase subunit alpha (330 aa).

The tract at residues 1–229 is alpha N-terminal domain (alpha-NTD); sequence MKNLKFIKPF…DHFNVLVELS (229 aa). The segment at 245–330 is alpha C-terminal domain (alpha-CTD); that stretch reads AHNYVLDLEI…HSVEEDKDKH (86 aa).

This sequence belongs to the RNA polymerase alpha chain family. Homodimer. The RNAP catalytic core consists of 2 alpha, 1 beta, 1 beta' and 1 omega subunit. When a sigma factor is associated with the core the holoenzyme is formed, which can initiate transcription.

The catalysed reaction is RNA(n) + a ribonucleoside 5'-triphosphate = RNA(n+1) + diphosphate. Its function is as follows. DNA-dependent RNA polymerase catalyzes the transcription of DNA into RNA using the four ribonucleoside triphosphates as substrates. The chain is DNA-directed RNA polymerase subunit alpha from Aster yellows witches'-broom phytoplasma (strain AYWB).